The primary structure comprises 68 residues: Riparin-1.6 (68 aa).

The signal sequence occupies residues 1–15 (MKIIVFLAVLMLVSA). The propeptide occupies 16–41 (QVCLVSAAEMEHSSDNELSSRDLVKR). A disulfide bond links cysteine 47 and cysteine 53. The residue at position 53 (cysteine 53) is a Cysteine amide. Positions 57–68 (DIESSEGANGGE) are excised as a propeptide.

Expressed by the skin glands.

Its subcellular location is the secreted. In Crinia riparia (Streambank froglet), this protein is Riparin-1.6.